Reading from the N-terminus, the 107-residue chain is MKNLAGLMKQASQMQAKMGEMQAKLETVEAEGSAGAGMVTVTLNGKGDLRRLHIDPKLADPAETEMLEDLIVAAHNDAKKKIETMAAEEMQKVTGGLNLPAGMKLPF.

This sequence belongs to the YbaB/EbfC family. In terms of assembly, homodimer.

It is found in the cytoplasm. It localises to the nucleoid. In terms of biological role, binds to DNA and alters its conformation. May be involved in regulation of gene expression, nucleoid organization and DNA protection. The chain is Nucleoid-associated protein GbCGDNIH1_0260 from Granulibacter bethesdensis (strain ATCC BAA-1260 / CGDNIH1).